The primary structure comprises 93 residues: Class I hydrophobin SSP1 (93 aa).

The first 26 residues, 1 to 26, serve as a signal peptide directing secretion; the sequence is MKYITAISMLATAALTAATPLNGVEA. 4 disulfide bridges follow: Cys39–Cys71, Cys47–Cys65, Cys48–Cys56, and Cys72–Cys89.

Belongs to the fungal hydrophobin family. In terms of assembly, self-assembles to form functional amyloid fibrils called rodlets. Self-assembly into fibrillar rodlets occurs spontaneously at hydrophobic:hydrophilic interfaces and the rodlets further associate laterally to form amphipathic monolayers.

The protein localises to the secreted. It is found in the cell wall. In terms of biological role, aerial growth, conidiation, and dispersal of filamentous fungi in the environment rely upon a capability of their secreting small amphipathic proteins called hydrophobins (HPBs) with low sequence identity. Class I can self-assemble into an outermost layer of rodlet bundles on aerial cell surfaces, conferring cellular hydrophobicity that supports fungal growth, development and dispersal; whereas Class II form highly ordered films at water-air interfaces through intermolecular interactions but contribute nothing to the rodlet structure. SSP1 is a class I hydrophobin that acts as an effector in the ericoid mycorrhizal interaction with Vaccinium myrtillus. May enhance attachment of the fungus to the root surface and protect the fungal hypha from plant defense compounds. In Oidiodendron maius (strain Zn), this protein is Class I hydrophobin SSP1.